The chain runs to 92 residues: uncharacterized protein (92 aa).

Positions 25–53 are disordered; that stretch reads AGRGVRREARDTPCRGTAEGLATSQPEDG.

This is an uncharacterized protein from Treponema pallidum (strain Nichols).